Consider the following 146-residue polypeptide: 3-hydroxyacyl-[acyl-carrier-protein] dehydratase FabZ (146 aa).

H48 is an active-site residue.

Belongs to the thioester dehydratase family. FabZ subfamily.

It is found in the cytoplasm. The catalysed reaction is a (3R)-hydroxyacyl-[ACP] = a (2E)-enoyl-[ACP] + H2O. Involved in unsaturated fatty acids biosynthesis. Catalyzes the dehydration of short chain beta-hydroxyacyl-ACPs and long chain saturated and unsaturated beta-hydroxyacyl-ACPs. This is 3-hydroxyacyl-[acyl-carrier-protein] dehydratase FabZ from Acetivibrio thermocellus (strain ATCC 27405 / DSM 1237 / JCM 9322 / NBRC 103400 / NCIMB 10682 / NRRL B-4536 / VPI 7372) (Clostridium thermocellum).